The following is a 302-amino-acid chain: Tegument protein VP22 (302 aa).

Over residues 1-10 the composition is skewed to basic and acidic residues; that stretch reads MASSDGDRLC. Disordered stretches follow at residues 1–42 and 125–167; these read MASS…PDDS and SFTK…TATS. The segment at 154–244 is interaction with gE; that stretch reads RPISFSTAPK…ANEADLGEGA (91 aa). Positions 157 to 167 are enriched in polar residues; the sequence is SFSTAPKTATS. The Nuclear export signal signature appears at 212–224; the sequence is LDRLLTGAVIRIT. Residues 243 to 302 form a disordered region; the sequence is GASVSKRGHNRKTGDLQGGMGNEPMYAQVRKPKSRTDTQTTGRITNRSRARSASRTDARK.

This sequence belongs to the alphaherpesvirinae VP22 tegument protein family. In terms of assembly, interacts with gE (via C-terminus); this interaction is necessary for the recruitment of VP22/ORF9 to the Golgi and its packaging into virions. Interacts with gM (via C-terminus). Interacts with VP16/ORF10; this interaction allows the formation of a tripartite complex composed of VP16/ORF10, VP22/ORF9 and VHS/ORF17. Interacts with the capsid-binding protein ORF44. Interacts with host CGAS. In terms of processing, highly phosphorylated in the host cell. Packaging is selective for underphosphorylated forms.

It is found in the virion tegument. Its subcellular location is the host cytoplasm. The protein resides in the host nucleus. The protein localises to the host Golgi apparatus. Functionally, tegument protein that plays different roles during the time course of infection. Participates in both the accumulation of viral mRNAs and viral protein translation at late time of infection. Modulates the RNase activity of the virion host shutoff protein ORF17 probably to ensure necessary levels of key cellular mRNAs and proteins. Plays a role in microtubule reorganization that occurs after viral infection by stabilizing microtubule network. Plays a role in the inhibition of host innate immune system by targeting the CGAS enzymatic activity which is the principal cytosolic DNA sensor that detects invading viral DNA. Acts by mediating disruption of liquid-like droplets in which CGAS is activated, thereby preventing CGAS activity. This is Tegument protein VP22 from Varicella-zoster virus (strain Oka vaccine) (HHV-3).